The sequence spans 142 residues: Lipoprotein MlpI (142 aa).

The N-terminal stretch at 1–17 (MKIINILFCLFLLMLNS) is a signal peptide. Residue C18 is the site of N-palmitoyl cysteine attachment. The S-diacylglycerol cysteine moiety is linked to residue C18. The tract at residues 22–54 (DTNTSQTKSRQKRDLTQKEATQEKPKSKEDLLR) is disordered. Over residues 33 to 54 (KRDLTQKEATQEKPKSKEDLLR) the composition is skewed to basic and acidic residues.

The protein belongs to the Multicopy lipoprotein (Mlp) family.

Its subcellular location is the cell outer membrane. An outer membrane protein that may participate in pathogenesis. Some human Lyme disease patients have antibodies against this protein. The Mlp proteins probably undergo intragenic recombination, generating new alleles. In Borreliella burgdorferi (strain ATCC 35210 / DSM 4680 / CIP 102532 / B31) (Borrelia burgdorferi), this protein is Lipoprotein MlpI.